The sequence spans 551 residues: Malate synthase, glyoxysomal (551 aa).

Catalysis depends on arginine 174, which acts as the Proton acceptor. The active-site Proton donor is aspartate 458.

It belongs to the malate synthase family.

The protein resides in the glyoxysome. It catalyses the reaction glyoxylate + acetyl-CoA + H2O = (S)-malate + CoA + H(+). It functions in the pathway carbohydrate metabolism; glyoxylate cycle; (S)-malate from isocitrate: step 2/2. The chain is Malate synthase, glyoxysomal (PMS1) from Candida tropicalis (Yeast).